A 426-amino-acid chain; its full sequence is Histidine--tRNA ligase (426 aa).

Belongs to the class-II aminoacyl-tRNA synthetase family. As to quaternary structure, homodimer.

It is found in the cytoplasm. It catalyses the reaction tRNA(His) + L-histidine + ATP = L-histidyl-tRNA(His) + AMP + diphosphate + H(+). This chain is Histidine--tRNA ligase, found in Colwellia psychrerythraea (strain 34H / ATCC BAA-681) (Vibrio psychroerythus).